Here is a 759-residue protein sequence, read N- to C-terminus: 1,4-alpha-glucan branching enzyme GlgB (759 aa).

A disordered region spans residues 1-21 (MAKTKGLPKDTAVTPSPHLRP). The active-site Nucleophile is the aspartate 422. The active-site Proton donor is glutamate 475.

The protein belongs to the glycosyl hydrolase 13 family. GlgB subfamily. Monomer.

The enzyme catalyses Transfers a segment of a (1-&gt;4)-alpha-D-glucan chain to a primary hydroxy group in a similar glucan chain.. The protein operates within glycan biosynthesis; glycogen biosynthesis. Functionally, catalyzes the formation of the alpha-1,6-glucosidic linkages in glycogen by scission of a 1,4-alpha-linked oligosaccharide from growing alpha-1,4-glucan chains and the subsequent attachment of the oligosaccharide to the alpha-1,6 position. The chain is 1,4-alpha-glucan branching enzyme GlgB from Mycobacterium sp. (strain JLS).